Here is a 227-residue protein sequence, read N- to C-terminus: Cytochrome c oxidase subunit 2 (227 aa).

The Mitochondrial intermembrane portion of the chain corresponds to Met1–Ser14. A helical transmembrane segment spans residues Pro15 to Met45. Residues Leu46–Gln59 lie on the Mitochondrial matrix side of the membrane. The chain crosses the membrane as a helical span at residues Glu60 to Met87. Residues Asp88–Val227 are Mitochondrial intermembrane-facing. Residues His161, Cys196, Glu198, Cys200, His204, and Met207 each contribute to the Cu cation site. Position 198 (Glu198) interacts with Mg(2+). A Phosphotyrosine modification is found at Tyr218.

It belongs to the cytochrome c oxidase subunit 2 family. In terms of assembly, component of the cytochrome c oxidase (complex IV, CIV), a multisubunit enzyme composed of 14 subunits. The complex is composed of a catalytic core of 3 subunits MT-CO1, MT-CO2 and MT-CO3, encoded in the mitochondrial DNA, and 11 supernumerary subunits COX4I, COX5A, COX5B, COX6A, COX6B, COX6C, COX7A, COX7B, COX7C, COX8 and NDUFA4, which are encoded in the nuclear genome. The complex exists as a monomer or a dimer and forms supercomplexes (SCs) in the inner mitochondrial membrane with NADH-ubiquinone oxidoreductase (complex I, CI) and ubiquinol-cytochrome c oxidoreductase (cytochrome b-c1 complex, complex III, CIII), resulting in different assemblies (supercomplex SCI(1)III(2)IV(1) and megacomplex MCI(2)III(2)IV(2)). Found in a complex with TMEM177, COA6, COX18, COX20, SCO1 and SCO2. Interacts with TMEM177 in a COX20-dependent manner. Interacts with COX20. Interacts with COX16. Requires Cu cation as cofactor.

The protein resides in the mitochondrion inner membrane. It carries out the reaction 4 Fe(II)-[cytochrome c] + O2 + 8 H(+)(in) = 4 Fe(III)-[cytochrome c] + 2 H2O + 4 H(+)(out). Component of the cytochrome c oxidase, the last enzyme in the mitochondrial electron transport chain which drives oxidative phosphorylation. The respiratory chain contains 3 multisubunit complexes succinate dehydrogenase (complex II, CII), ubiquinol-cytochrome c oxidoreductase (cytochrome b-c1 complex, complex III, CIII) and cytochrome c oxidase (complex IV, CIV), that cooperate to transfer electrons derived from NADH and succinate to molecular oxygen, creating an electrochemical gradient over the inner membrane that drives transmembrane transport and the ATP synthase. Cytochrome c oxidase is the component of the respiratory chain that catalyzes the reduction of oxygen to water. Electrons originating from reduced cytochrome c in the intermembrane space (IMS) are transferred via the dinuclear copper A center (CU(A)) of subunit 2 and heme A of subunit 1 to the active site in subunit 1, a binuclear center (BNC) formed by heme A3 and copper B (CU(B)). The BNC reduces molecular oxygen to 2 water molecules using 4 electrons from cytochrome c in the IMS and 4 protons from the mitochondrial matrix. This Canis mesomelas elongae (Eastern African black-backed jackal) protein is Cytochrome c oxidase subunit 2 (MT-CO2).